The following is an 816-amino-acid chain: Lon protease (816 aa).

Residues 27–221 enclose the Lon N-terminal domain; sequence LPLLPIRDVV…KVNDLLAREH (195 aa). 372-379 contributes to the ATP binding site; that stretch reads GPPGVGKT. The region spanning 608–789 is the Lon proteolytic domain; the sequence is KNEVGVVNGL…DEVLKLALEK (182 aa). Catalysis depends on residues S695 and K738. A disordered region spans residues 795-816; that stretch reads PKGKAKPATPKVVVRPSKEISA. Residues 800–809 show a composition bias toward low complexity; sequence KPATPKVVVR.

Belongs to the peptidase S16 family. Homohexamer. Organized in a ring with a central cavity.

The protein localises to the cytoplasm. The enzyme catalyses Hydrolysis of proteins in presence of ATP.. Functionally, ATP-dependent serine protease that mediates the selective degradation of mutant and abnormal proteins as well as certain short-lived regulatory proteins. Required for cellular homeostasis and for survival from DNA damage and developmental changes induced by stress. Degrades polypeptides processively to yield small peptide fragments that are 5 to 10 amino acids long. Binds to DNA in a double-stranded, site-specific manner. The polypeptide is Lon protease (Trichlorobacter lovleyi (strain ATCC BAA-1151 / DSM 17278 / SZ) (Geobacter lovleyi)).